A 67-amino-acid polypeptide reads, in one-letter code: Large ribosomal subunit protein bL35 (67 aa).

The span at 1 to 16 shows a compositional bias: basic residues; the sequence is MPKMKTKSSAKKRFRV. Positions 1 to 24 are disordered; the sequence is MPKMKTKSSAKKRFRVRPGGTVKR.

Belongs to the bacterial ribosomal protein bL35 family.

This is Large ribosomal subunit protein bL35 from Delftia acidovorans (strain DSM 14801 / SPH-1).